A 471-amino-acid chain; its full sequence is Heat shock 70 kDa protein 13 (471 aa).

Residues 1 to 22 (MAGEMTILGSAVLTLLLAGYLA) form the signal peptide. The segment at 315 to 337 (ENDRKGPPTSDSELPKDKFSQAN) is disordered.

Belongs to the heat shock protein 70 family. Binds UBQLN2.

It localises to the microsome. The protein localises to the endoplasmic reticulum. Has peptide-independent ATPase activity. This is Heat shock 70 kDa protein 13 (HSPA13) from Bos taurus (Bovine).